The following is a 970-amino-acid chain: MLRLRLSPTFSVGFHLLAFVPLLFSHVDLISADTEMEGEGNETGECTGSYYCKKGVILPIWEPQDPSFGDKIARATVYFVAMVYMFLGVSIIADRFMSSIEVITSQEKEITIKKPNGETTKTTVRIWNETVSNLTLMALGSSAPEILLSVIEVCGHNFTAGDLGPSTIVGSAAFNMFIIIALCVYVVPDGETRKIKHLRVFFVTAAWSIFAYTWLYIILSVISPGVVEVWEGLLTFFFFPICVVFAWVADRRLLFYKYVYKRYRAGKQRGMIIEHEGDRPSSKTEIEMDGKVVNSHVDNFLDGALVLEVDERDQDDEEARREMARILKELKQKHPEKEIEQLIELANYQVLSQQQKSRAFYRIQATRLMTGAGNILKRHAADQARKAVSMHEVNTEVAENDPVSKIFFEQGTYQCLENCGTVALTILRRGGDLTNTVFVDFRTEDGTANAGSDYEFTEGTVVFKPGETQKEIRVGIIDDDIFEEDENFLVHLSNVKVSSEASEDGILEANHVSTLACLGSPSTATVTIFDDDHAGIFTFEEPVTHVSESIGIMEVKVLRTSGARGNVIVPYKTIEGTARGGGEDFEDTCGELEFQNDEIVKTISVKVIDDEEYEKNKTFFLEIGEPRLVEMSEKKALLLNELGGFTITGKYLYGQPVFRKVHAREHPIPSTVITIAEECDAKQPLTSKEEEERRIAEMGRPILGEHTKLEVIIEESYEFKSTVDKLIKKTNLALVVGTNSWREQFIEAITVSAGEDDDDDECGEEKLPSCFDYVMHFLTVFWKVLFAFVPPTEYWNGWACFIVSILMIGILTAFIGDLASHFGCTIGLKDSVTAVVFVALGTSVPDTFASKVAATQDQYADASIGNVTGSNAVNVFLGIGVAWSIAAIYHAANGEQFKVSPGTLAFSVTLFTIFAFINVGVLLYRRRPEIGGELGGPRTAKLLTSCLFVLLWLLYIFFSSLEAYCHIKGF.

Positions 1 to 32 (MLRLRLSPTFSVGFHLLAFVPLLFSHVDLISA) are cleaved as a signal peptide. At 33-71 (DTEMEGEGNETGECTGSYYCKKGVILPIWEPQDPSFGDK) the chain is on the extracellular side. Asparagine 41 carries an N-linked (GlcNAc...) asparagine glycan. The helical transmembrane segment at 72–92 (IARATVYFVAMVYMFLGVSII) threads the bilayer. The Cytoplasmic segment spans residues 93–133 (ADRFMSSIEVITSQEKEITIKKPNGETTKTTVRIWNETVSN). The chain crosses the membrane as a helical span at residues 134-154 (LTLMALGSSAPEILLSVIEVC). The stretch at 138 to 178 (ALGSSAPEILLSVIEVCGHNFTAGDLGPSTIVGSAAFNMFI) is one Alpha-1 repeat. The Extracellular portion of the chain corresponds to 155–167 (GHNFTAGDLGPST). Residue asparagine 157 is glycosylated (N-linked (GlcNAc...) asparagine). Residues 168 to 188 (IVGSAAFNMFIIIALCVYVVP) form a helical membrane-spanning segment. The Cytoplasmic portion of the chain corresponds to 189 to 201 (DGETRKIKHLRVF). The helical transmembrane segment at 202–222 (FVTAAWSIFAYTWLYIILSVI) threads the bilayer. Residues 223–228 (SPGVVE) lie on the Extracellular side of the membrane. Residues 229-249 (VWEGLLTFFFFPICVVFAWVA) form a helical membrane-spanning segment. At 250–797 (DRRLLFYKYV…FVPPTEYWNG (548 aa)) the chain is on the cytoplasmic side. Residues 251 to 270 (RRLLFYKYVYKRYRAGKQRG) are putative calmodulin-binding region. Serine 282 and serine 389 each carry phosphoserine. 2 consecutive Calx-beta domains span residues 393-493 (VNTE…VHLS) and 524-624 (ATVT…LEIG). Ca(2+) contacts are provided by glutamate 417, aspartate 453, aspartate 478, aspartate 479, isoleucine 481, glutamate 483, glutamate 486, aspartate 530, aspartate 531, aspartate 532, glutamate 548, aspartate 584, aspartate 610, glutamate 611, glutamate 612, and glutamate 715. Residues 798–818 (WACFIVSILMIGILTAFIGDL) form a helical membrane-spanning segment. Residues 819–821 (ASH) lie on the Extracellular side of the membrane. A helical transmembrane segment spans residues 822-842 (FGCTIGLKDSVTAVVFVALGT). The stretch at 839–875 (ALGTSVPDTFASKVAATQDQYADASIGNVTGSNAVNV) is one Alpha-2 repeat. Residues 843-871 (SVPDTFASKVAATQDQYADASIGNVTGSN) are Cytoplasmic-facing. Residues 872-892 (AVNVFLGIGVAWSIAAIYHAA) form a helical membrane-spanning segment. Residues 893-903 (NGEQFKVSPGT) are Extracellular-facing. The helical transmembrane segment at 904 to 924 (LAFSVTLFTIFAFINVGVLLY) threads the bilayer. Residues 925 to 941 (RRRPEIGGELGGPRTAK) are Cytoplasmic-facing. Residues 942–962 (LLTSCLFVLLWLLYIFFSSLE) traverse the membrane as a helical segment. The Extracellular portion of the chain corresponds to 963 to 970 (AYCHIKGF).

The protein belongs to the Ca(2+):cation antiporter (CaCA) (TC 2.A.19) family. SLC8 subfamily. In terms of tissue distribution, detected in heart (at protein level). Detected in heart.

The protein resides in the cell membrane. The catalysed reaction is Ca(2+)(in) + 3 Na(+)(out) = Ca(2+)(out) + 3 Na(+)(in). With respect to regulation, activated by micromolar levels of Ca(2+). In terms of biological role, mediates the exchange of one Ca(2+) ion against three to four Na(+) ions across the cell membrane, and thereby contributes to the regulation of cytoplasmic Ca(2+) levels and Ca(2+)-dependent cellular processes. Contributes to Ca(2+) transport during excitation-contraction coupling in muscle. In a first phase, voltage-gated channels mediate the rapid increase of cytoplasmic Ca(2+) levels due to release of Ca(2+) stores from the endoplasmic reticulum. SLC8A1 mediates the export of Ca(2+) from the cell during the next phase, so that cytoplasmic Ca(2+) levels rapidly return to baseline. Required for normal embryonic heart development and the onset of heart contractions. This Felis catus (Cat) protein is Sodium/calcium exchanger 1 (SLC8A1).